The sequence spans 159 residues: Transcription elongation factor A protein-like 1 (159 aa).

The interval 1–97 (MDKPRKENEE…PPCGVGKHKL (97 aa)) is disordered. The span at 17 to 34 (KTDEERPPVEHSPEKQSP) shows a compositional bias: basic and acidic residues. 6 positions are modified to phosphoserine: Ser28, Ser33, Ser38, Ser39, Ser43, and Ser44. Residues 37 to 54 (QSSEEQSSEEEFFPEELL) are compositionally biased toward acidic residues. Positions 64-80 (SEERPPQEGLSRKDLFE) are enriched in basic and acidic residues.

Belongs to the TFS-II family. TFA subfamily. Post-translationally, phosphorylation of Ser-38 and Ser-39 is critical for transcriptional repression. As to expression, expressed in all tissues examined. Highly expressed in heart, ovary, prostate and skeletal muscle. Moderately expressed in brain, placenta, testis and small intestine. Weakly expressed in lung, liver and spleen. Expressed in several cancer cell lines.

Its subcellular location is the nucleus. Functionally, may be involved in transcriptional regulation. Modulates various viral and cellular promoters in a promoter context-dependent manner. For example, transcription from the FOS promoter is increased, while Rous sarcoma virus (RSV) long terminal repeat (LTR) promoter activity is repressed. Does not bind DNA directly. The protein is Transcription elongation factor A protein-like 1 of Homo sapiens (Human).